Consider the following 77-residue polypeptide: Large ribosomal subunit protein uL24 (77 aa).

The segment at 42–61 (KKHQKPSQTNANGGVVESEG) is disordered.

This sequence belongs to the universal ribosomal protein uL24 family. In terms of assembly, part of the 50S ribosomal subunit.

Its function is as follows. One of two assembly initiator proteins, it binds directly to the 5'-end of the 23S rRNA, where it nucleates assembly of the 50S subunit. Functionally, one of the proteins that surrounds the polypeptide exit tunnel on the outside of the subunit. In Lactobacillus helveticus (strain DPC 4571), this protein is Large ribosomal subunit protein uL24.